The sequence spans 120 residues: Crustacean hyperglycemic hormones 2 (120 aa).

A signal peptide spans 1-27; sequence MIAFHMVWSALLASLLLLLLAPSASPV. Cystine bridges form between cysteine 53-cysteine 89, cysteine 69-cysteine 85, and cysteine 72-cysteine 98. Valine 118 bears the Valine amide mark.

The protein belongs to the arthropod CHH/MIH/GIH/VIH hormone family.

The protein resides in the secreted. Hormone found in the sinus gland of isopods and decapods which controls the blood sugar level. Has a secretagogue action over the amylase released from the midgut gland. May act as a stress hormone and may be involved in the control of molting and reproduction. The polypeptide is Crustacean hyperglycemic hormones 2 (Penaeus japonicus (Kuruma prawn)).